Here is a 196-residue protein sequence, read N- to C-terminus: Ankyrin repeat domain-containing protein 66 (196 aa).

ANK repeat units follow at residues 7 to 37 (SDMTKLHQAVAAGDYSLVKKILKKGLCDPNY), 43 to 72 (NDRTPLHWAAIKGQMEVIRLLIEYGARPCL), and 76 to 105 (VGWTPAHFAAEAGHLNILKTLHALHAAIDA). The segment at 152–196 (ERDEDWDAKKRELELSLPSLNQNMNKKNKKSRGPTRPSNTKGRRV) is disordered. Residues 187–196 (RPSNTKGRRV) show a composition bias toward polar residues.

This Homo sapiens (Human) protein is Ankyrin repeat domain-containing protein 66 (ANKRD66).